Reading from the N-terminus, the 236-residue chain is Ribonuclease HII (236 aa).

One can recognise an RNase H type-2 domain in the interval 21–214 (RTVAGVDEVG…LDALPRWQHL (194 aa)). Residues aspartate 27, glutamate 28, and aspartate 119 each contribute to the a divalent metal cation site.

Belongs to the RNase HII family. The cofactor is Mn(2+). Mg(2+) serves as cofactor.

Its subcellular location is the cytoplasm. The catalysed reaction is Endonucleolytic cleavage to 5'-phosphomonoester.. Endonuclease that specifically degrades the RNA of RNA-DNA hybrids. In Streptomyces griseus subsp. griseus (strain JCM 4626 / CBS 651.72 / NBRC 13350 / KCC S-0626 / ISP 5235), this protein is Ribonuclease HII.